The sequence spans 512 residues: MEEFQRYLKLNRSQQHYFLYPLIFQEYIYALAHDHGLNRNRSIFLENVGYNKFSLLIVKRAIERMYQYEQKHLILFDNDFNQNRFFGRNNNFSFQMISEGFAVIVEIPFYLRLLSSLEKKGIVKSNNLRSIHSIFPFLEDNFSHLIYVLEILIPYPAHLEILIQTLRYWVKDASSLHLLRFFLHEYRSWNTPNKASSFFSKRNQRFFFVLYNSHICEYESIFVFLRNQSSHLCSTSSGTLLERIYFYGKLEHLVLVEAFAKAFQANLWLFKDPFMHYVRYQGKSILASKGTPPLMKKWTYYFVNLWECRFYLWSQPGRICINQLYNNSLSLLGYISSAGLNPSMVRSQMLENAFIIDNPIKKFDTLVPIVPLIGSLAKARFCNVLGHPISKAVWTDLSDSDIIVRFGRICRNLSHFFSGSSQKKSLYRIKYILRLSCARTLARKHKSTVRAFLKRSGSGLLEEFFTAEEQVLYLTFPRASSTSHRLYRRRIWYLDIICINDLASHELNDSLV.

This sequence belongs to the intron maturase 2 family. MatK subfamily.

It localises to the plastid. The protein localises to the chloroplast. Its function is as follows. Usually encoded in the trnK tRNA gene intron. Probably assists in splicing its own and other chloroplast group II introns. This Daucus carota (Wild carrot) protein is Maturase K.